The following is a 103-amino-acid chain: ATP-dependent Clp protease adapter protein ClpS (103 aa).

The protein belongs to the ClpS family. As to quaternary structure, binds to the N-terminal domain of the chaperone ClpA.

Involved in the modulation of the specificity of the ClpAP-mediated ATP-dependent protein degradation. This chain is ATP-dependent Clp protease adapter protein ClpS, found in Neisseria meningitidis serogroup A / serotype 4A (strain DSM 15465 / Z2491).